We begin with the raw amino-acid sequence, 118 residues long: Large ribosomal subunit protein bL20 (118 aa).

Belongs to the bacterial ribosomal protein bL20 family.

Functionally, binds directly to 23S ribosomal RNA and is necessary for the in vitro assembly process of the 50S ribosomal subunit. It is not involved in the protein synthesizing functions of that subunit. The sequence is that of Large ribosomal subunit protein bL20 from Francisella tularensis subsp. tularensis (strain FSC 198).